We begin with the raw amino-acid sequence, 221 residues long: Ribosomal RNA small subunit methyltransferase G (221 aa).

Residues glycine 89, leucine 94, 140–141 (VE), and arginine 154 contribute to the S-adenosyl-L-methionine site.

This sequence belongs to the methyltransferase superfamily. RNA methyltransferase RsmG family.

The protein localises to the cytoplasm. The catalysed reaction is guanosine(527) in 16S rRNA + S-adenosyl-L-methionine = N(7)-methylguanosine(527) in 16S rRNA + S-adenosyl-L-homocysteine. In terms of biological role, specifically methylates the N7 position of guanine in position 527 of 16S rRNA. The sequence is that of Ribosomal RNA small subunit methyltransferase G from Methylibium petroleiphilum (strain ATCC BAA-1232 / LMG 22953 / PM1).